Reading from the N-terminus, the 243-residue chain is Aliphatic sulfonates import ATP-binding protein SsuB (243 aa).

Residues 11–230 (ATVRGLRKSY…RTHPSFASYT (220 aa)) form the ABC transporter domain. An ATP-binding site is contributed by 43–50 (GRSGSGKS).

It belongs to the ABC transporter superfamily. Aliphatic sulfonates importer (TC 3.A.1.17.2) family. The complex is composed of two ATP-binding proteins (SsuB), two transmembrane proteins (SsuC) and a solute-binding protein (SsuA).

Its subcellular location is the cell membrane. It catalyses the reaction ATP + H2O + aliphatic sulfonate-[sulfonate-binding protein]Side 1 = ADP + phosphate + aliphatic sulfonateSide 2 + [sulfonate-binding protein]Side 1.. In terms of biological role, part of the ABC transporter complex SsuABC involved in aliphatic sulfonates import. Responsible for energy coupling to the transport system. Is also involved in taurine transport. Seems to not be involved in long chain aliphatic sulfonates transport (chain length of eight carbon atoms or more). This is Aliphatic sulfonates import ATP-binding protein SsuB from Corynebacterium glutamicum (strain ATCC 13032 / DSM 20300 / JCM 1318 / BCRC 11384 / CCUG 27702 / LMG 3730 / NBRC 12168 / NCIMB 10025 / NRRL B-2784 / 534).